A 361-amino-acid polypeptide reads, in one-letter code: Nuclear pore complex protein NUP43 (361 aa).

Residues 51–73 (IQSLDPNPRGNHNTNPLIESLSS) form a disordered region. WD repeat units lie at residues 132–173 (FHVG…YRKV), 177–215 (NGLVAYRAVKWASPTEFVTGGYGFGLQLWDQRKSGEAVS), and 225–265 (KTSA…QPIV).

In terms of assembly, part of the nuclear pore complex (NPC). The NPC has an eight-fold symmetrical structure comprising a central transport channel and two rings, the cytoplasmic and nuclear rings, to which eight filaments are attached. The cytoplasmic filaments have loose ends, while the nuclear filaments are joined in a distal ring, forming a nuclear basket. NPCs are highly dynamic in configuration and composition, and can be devided in 3 subcomplexes, the NUP62 subcomplex, the NUP107-160 subcomplex and the NUP93 subcomplex, containing approximately 30 different nucleoporin proteins.

It is found in the nucleus envelope. The protein localises to the nucleus. It localises to the nuclear pore complex. The protein is Nuclear pore complex protein NUP43 of Arabidopsis thaliana (Mouse-ear cress).